The following is a 412-amino-acid chain: Dihydrolipoyllysine-residue acetyltransferase component of pyruvate dehydrogenase complex (412 aa).

The region spanning 2–78 (PIKILMPVLS…PVNSLIAVLS (77 aa)) is the Lipoyl-binding domain. Lysine 43 bears the N6-lipoyllysine mark. The Peripheral subunit-binding (PSBD) domain occupies 132–169 (FASPLAKRLAKMGNIRLESVKGSGPHGRIVKQDILSYT). Histidine 385 is a catalytic residue.

This sequence belongs to the 2-oxoacid dehydrogenase family. Forms a 24-polypeptide structural core with octahedral symmetry. It depends on (R)-lipoate as a cofactor.

The enzyme catalyses N(6)-[(R)-dihydrolipoyl]-L-lysyl-[protein] + acetyl-CoA = N(6)-[(R)-S(8)-acetyldihydrolipoyl]-L-lysyl-[protein] + CoA. In terms of biological role, the pyruvate dehydrogenase complex catalyzes the overall conversion of pyruvate to acetyl-CoA and CO(2). It contains multiple copies of three enzymatic components: pyruvate dehydrogenase (E1), dihydrolipoamide acetyltransferase (E2) and lipoamide dehydrogenase (E3). The chain is Dihydrolipoyllysine-residue acetyltransferase component of pyruvate dehydrogenase complex (pdhC) from Rickettsia felis (strain ATCC VR-1525 / URRWXCal2) (Rickettsia azadi).